Reading from the N-terminus, the 907-residue chain is Valine--tRNA ligase (907 aa).

The short motif at 45–55 (PNVTGSLHMGH) is the 'HIGH' region element. The short motif at 554–558 (KMSKS) is the 'KMSKS' region element. Position 557 (Lys557) interacts with ATP. The stretch at 838-870 (GQLIDLEAERARLVKNVSKIEQDIEKISVKLNN) forms a coiled coil.

This sequence belongs to the class-I aminoacyl-tRNA synthetase family. ValS type 1 subfamily. Monomer.

It localises to the cytoplasm. It catalyses the reaction tRNA(Val) + L-valine + ATP = L-valyl-tRNA(Val) + AMP + diphosphate. Its function is as follows. Catalyzes the attachment of valine to tRNA(Val). As ValRS can inadvertently accommodate and process structurally similar amino acids such as threonine, to avoid such errors, it has a 'posttransfer' editing activity that hydrolyzes mischarged Thr-tRNA(Val) in a tRNA-dependent manner. This is Valine--tRNA ligase from Bartonella quintana (strain Toulouse) (Rochalimaea quintana).